The chain runs to 714 residues: Protein artemis (714 aa).

Disordered regions lie at residues 391–500 (ELFD…ESNA), 516–577 (ESSE…TVLI), 598–617 (ALLS…RWKL), and 638–683 (EKDA…LTPD). The segment covering 427–440 (NESTESYRANTAYT) has biased composition (polar residues). Residues 447 to 468 (VDCEESNDDDDDDDDDDKEDDS) are compositionally biased toward acidic residues. 2 stretches are compositionally biased toward polar residues: residues 484–500 (SIAS…ESNA) and 532–543 (GSQSLFSDSDGV). Positions 544-561 (SDSTHISSQNSSQSTHIS) are enriched in low complexity. Over residues 562 to 577 (EQGSQGWDSQMDTVLI) the composition is skewed to polar residues. Basic and acidic residues-rich tracts occupy residues 603-615 (DTPR…DSRW) and 660-670 (RTPDLELKRDS). S670 bears the Phosphoserine; by ATM mark.

Belongs to the DNA repair metallo-beta-lactamase (DRMBL) family. As to quaternary structure, interacts with PRKDC. Phosphorylation on undefined residues by PRKDC may stimulate endonucleolytic activity on 5' and 3' hairpins and overhangs. PRKDC must remain present, even after phosphorylation, for efficient hairpin opening.

The protein resides in the nucleus. Functionally, required for V(D)J recombination, the process by which exons encoding the antigen-binding domains of immunoglobulins and T-cell receptor proteins are assembled from individual V, (D), and J gene segments. V(D)J recombination is initiated by the lymphoid specific RAG endonuclease complex, which generates site specific DNA double strand breaks (DSBs). These DSBs present two types of DNA end structures: hairpin sealed coding ends and phosphorylated blunt signal ends. These ends are independently repaired by the non homologous end joining (NHEJ) pathway to form coding and signal joints respectively. This protein exhibits single-strand specific 5'-3' exonuclease activity in isolation, and acquires endonucleolytic activity on 5' and 3' hairpins and overhangs when in a complex with PRKDC. The latter activity is required specifically for the resolution of closed hairpins prior to the formation of the coding joint. May also be required for the repair of complex DSBs induced by ionizing radiation, which require substantial end-processing prior to religation by NHEJ. The protein is Protein artemis (DCLRE1C) of Gallus gallus (Chicken).